A 264-amino-acid chain; its full sequence is Proliferating cell nuclear antigen 2 (264 aa).

It belongs to the PCNA family. As to quaternary structure, homotrimer. Oligomer. Interacts with ORC1 (via PIP-box motif). Interacts with FEN1.

It is found in the nucleus. The protein localises to the chromosome. The protein resides in the cytoplasm. May be involved in DNA damage response. Appears not to be involved in DNA replication in trophozoites. The polypeptide is Proliferating cell nuclear antigen 2 (Plasmodium falciparum (isolate 3D7)).